A 488-amino-acid chain; its full sequence is Arginine biosynthesis bifunctional protein ArgJ, mitochondrial (488 aa).

Substrate contacts are provided by T227, K250, T261, E340, N483, and S488. T261 serves as the catalytic Nucleophile.

This sequence belongs to the ArgJ family. As to quaternary structure, heterodimer of an alpha and a beta chain. The alpha and beta chains are autoproteolytically processed from a single precursor protein within the mitochondrion.

Its subcellular location is the mitochondrion matrix. It carries out the reaction N(2)-acetyl-L-ornithine + L-glutamate = N-acetyl-L-glutamate + L-ornithine. The enzyme catalyses L-glutamate + acetyl-CoA = N-acetyl-L-glutamate + CoA + H(+). It functions in the pathway amino-acid biosynthesis; L-arginine biosynthesis; L-ornithine and N-acetyl-L-glutamate from L-glutamate and N(2)-acetyl-L-ornithine (cyclic): step 1/1. Its pathway is amino-acid biosynthesis; L-arginine biosynthesis; N(2)-acetyl-L-ornithine from L-glutamate: step 1/4. In terms of biological role, catalyzes two activities which are involved in the cyclic version of arginine biosynthesis: the synthesis of acetylglutamate from glutamate and acetyl-CoA, and of ornithine by transacetylation between acetylornithine and glutamate. This is Arginine biosynthesis bifunctional protein ArgJ, mitochondrial from Thalassiosira pseudonana (Marine diatom).